Consider the following 370-residue polypeptide: Anhydro-N-acetylmuramic acid kinase (370 aa).

12 to 19 serves as a coordination point for ATP; that stretch reads GTSLDGID.

The protein belongs to the anhydro-N-acetylmuramic acid kinase family.

It catalyses the reaction 1,6-anhydro-N-acetyl-beta-muramate + ATP + H2O = N-acetyl-D-muramate 6-phosphate + ADP + H(+). It participates in amino-sugar metabolism; 1,6-anhydro-N-acetylmuramate degradation. The protein operates within cell wall biogenesis; peptidoglycan recycling. In terms of biological role, catalyzes the specific phosphorylation of 1,6-anhydro-N-acetylmuramic acid (anhMurNAc) with the simultaneous cleavage of the 1,6-anhydro ring, generating MurNAc-6-P. Is required for the utilization of anhMurNAc either imported from the medium or derived from its own cell wall murein, and thus plays a role in cell wall recycling. The protein is Anhydro-N-acetylmuramic acid kinase of Yersinia enterocolitica serotype O:8 / biotype 1B (strain NCTC 13174 / 8081).